Consider the following 540-residue polypeptide: GMP synthase [glutamine-hydrolyzing] (540 aa).

Residues 26–216 (IIIILDFGSQ…VYHICECEPT (191 aa)) enclose the Glutamine amidotransferase type-1 domain. Cysteine 103 (nucleophile) is an active-site residue. Catalysis depends on residues histidine 190 and glutamate 192. A GMPS ATP-PPase domain is found at 217–415 (WTTAAFVEEA…VGLPEEIVQR (199 aa)). Residue 244–250 (SGGVDSS) coordinates ATP.

In terms of assembly, homodimer.

The catalysed reaction is XMP + L-glutamine + ATP + H2O = GMP + L-glutamate + AMP + diphosphate + 2 H(+). The protein operates within purine metabolism; GMP biosynthesis; GMP from XMP (L-Gln route): step 1/1. Its function is as follows. Catalyzes the synthesis of GMP from XMP. The sequence is that of GMP synthase [glutamine-hydrolyzing] from Trichormus variabilis (strain ATCC 29413 / PCC 7937) (Anabaena variabilis).